The primary structure comprises 91 residues: NADH-ubiquinone oxidoreductase chain 4L (91 aa).

Helical transmembrane passes span 8 to 28 (LYFI…MILL), 38 to 58 (LLML…VFLI), and 59 to 79 (SIVC…FFYG).

Belongs to the complex I subunit 4L family.

It is found in the mitochondrion membrane. It carries out the reaction a ubiquinone + NADH + 5 H(+)(in) = a ubiquinol + NAD(+) + 4 H(+)(out). Core subunit of the mitochondrial membrane respiratory chain NADH dehydrogenase (Complex I) that is believed to belong to the minimal assembly required for catalysis. Complex I functions in the transfer of electrons from NADH to the respiratory chain. The immediate electron acceptor for the enzyme is believed to be ubiquinone. The chain is NADH-ubiquinone oxidoreductase chain 4L (ND4L) from Rhipicephalus sanguineus (Brown dog tick).